The following is a 215-amino-acid chain: Cytochrome c biogenesis ATP-binding export protein CcmA (215 aa).

An ABC transporter domain is found at 8-215; it reads LQATALACER…RDLDLGQWSA (208 aa). Residue 40-47 coordinates ATP; it reads GPNGCGKT.

Belongs to the ABC transporter superfamily. CcmA exporter (TC 3.A.1.107) family. In terms of assembly, the complex is composed of two ATP-binding proteins (CcmA) and two transmembrane proteins (CcmB).

Its subcellular location is the cell inner membrane. The catalysed reaction is heme b(in) + ATP + H2O = heme b(out) + ADP + phosphate + H(+). Its function is as follows. Part of the ABC transporter complex CcmAB involved in the biogenesis of c-type cytochromes; once thought to export heme, this seems not to be the case, but its exact role is uncertain. Responsible for energy coupling to the transport system. This chain is Cytochrome c biogenesis ATP-binding export protein CcmA, found in Pseudomonas syringae pv. syringae (strain B728a).